Reading from the N-terminus, the 429-residue chain is Histidinol dehydrogenase (429 aa).

Residues Tyr127, Gln188, and Asn211 each coordinate NAD(+). Residues Ser234, Gln256, and His259 each coordinate substrate. Residues Gln256 and His259 each contribute to the Zn(2+) site. Residues Glu324 and His325 each act as proton acceptor in the active site. Substrate-binding residues include His325, Asp358, Glu412, and His417. Asp358 lines the Zn(2+) pocket. Position 417 (His417) interacts with Zn(2+).

It belongs to the histidinol dehydrogenase family. The cofactor is Zn(2+).

The enzyme catalyses L-histidinol + 2 NAD(+) + H2O = L-histidine + 2 NADH + 3 H(+). Its pathway is amino-acid biosynthesis; L-histidine biosynthesis; L-histidine from 5-phospho-alpha-D-ribose 1-diphosphate: step 9/9. In terms of biological role, catalyzes the sequential NAD-dependent oxidations of L-histidinol to L-histidinaldehyde and then to L-histidine. This is Histidinol dehydrogenase from Bacillus cereus (strain ATCC 10987 / NRS 248).